Reading from the N-terminus, the 1388-residue chain is Rho-associated protein kinase 2 (1388 aa).

The disordered stretch occupies residues 1 to 26; that stretch reads MSRPPPTGKMPGAPEAAPGDGAGAGR. The Protein kinase domain occupies 92–354; the sequence is YDVVKVIGRG…VEEIKQHPFF (263 aa). Residues 98–106 and K121 each bind ATP; that span reads IGRGAFGEV. Catalysis depends on D214, which acts as the Proton acceptor. In terms of domain architecture, AGC-kinase C-terminal spans 357–425; sequence DQWNWDNIRE…FRENLLLSDS (69 aa). The segment at 363 to 784 is interaction with PPP1R12A; that stretch reads NIRETAAPVV…LNELLKQKDV (422 aa). The tract at residues 373–420 is interaction with NPM1; the sequence is PELSSDIDSSNFDDIEDDKGDVETFPIPKAFVGNQLPFIGFTYFRENL. T414 is modified (phosphothreonine; by ROCK2). The stretch at 439-1131 forms a coiled coil; it reads SEESQEIQKK…QLQALHIGMD (693 aa). An REM-1 domain is found at 497–573; it reads TLRQLEREKA…LDEANALLRT (77 aa). Basic and acidic residues predominate over residues 512–530; sequence NAEYQRKADHEADKKRNLE. The tract at residues 512 to 532 is disordered; sequence NAEYQRKADHEADKKRNLEND. At Y722 the chain carries Phosphotyrosine; by SRC. One can recognise a RhoBD domain in the interval 979–1047; the sequence is TSDVANLANE…LAEIMNRKEP (69 aa). Positions 979–1047 are RHOA binding; the sequence is TSDVANLANE…LAEIMNRKEP (69 aa). S1137 carries the post-translational modification Phosphoserine. Residues 1150–1349 form the PH domain; it reads ESRLEGWLSL…WVSRLVKKIP (200 aa). Phosphothreonine is present on T1212. The Phorbol-ester/DAG-type zinc finger occupies 1260-1315; the sequence is GHEFIPTLYHFPTNCEACMKPLWHMFKPPPALECRRCHIKCHKDHMDKKEEIIAPC. The segment at 1345–1388 is disordered; sequence VKKIPKKPPAPDPFARSSPRTSMKIQQNQSIRRPSRQLAPNKPS. A phosphoserine mark is found at S1362 and S1374. Residues 1362-1376 are compositionally biased toward polar residues; sequence SPRTSMKIQQNQSIR.

This sequence belongs to the protein kinase superfamily. AGC Ser/Thr protein kinase family. Homodimer. Interacts with IRS1. Interacts with RAF1. Interacts with RHOA (activated by GTP), RHOB and RHOC. Interacts with PPP1R12A. Interacts with EP300. Interacts with CHORDC1. Interacts with BRCA2. Interacts with NPM1; this interaction enhances ROCK2 activity. Interacts with SORL1. Interacts with PJVK. Mg(2+) serves as cofactor. Post-translationally, autophosphorylated. Phosphorylation at Tyr-722 reduces its binding to RHOA and is crucial for focal adhesion dynamics. Dephosphorylation by PTPN11 stimulates its RHOA binding activity. In terms of processing, cleaved by granzyme B during apoptosis. This leads to constitutive activation of the kinase and membrane blebbing. In terms of tissue distribution, highly expressed in brain, heart, lung, liver, stomach, spleen, kidney, testis, muscle, embryo and placenta. Isoform 2 is expressed predominantly in the skeletal muscle.

The protein resides in the cytoplasm. The protein localises to the cell membrane. Its subcellular location is the nucleus. It localises to the cytoskeleton. It is found in the microtubule organizing center. The protein resides in the centrosome. The catalysed reaction is L-seryl-[protein] + ATP = O-phospho-L-seryl-[protein] + ADP + H(+). It carries out the reaction L-threonyl-[protein] + ATP = O-phospho-L-threonyl-[protein] + ADP + H(+). Activated by RHOA binding. Inhibited by Y-27632. Its function is as follows. Protein kinase which is a key regulator of actin cytoskeleton and cell polarity. Involved in regulation of smooth muscle contraction, actin cytoskeleton organization, stress fiber and focal adhesion formation, neurite retraction, cell adhesion and motility via phosphorylation of ADD1, BRCA2, CNN1, EZR, DPYSL2, EP300, MSN, MYL9/MLC2, NPM1, RDX, PPP1R12A and VIM. Phosphorylates SORL1 and IRF4. Acts as a negative regulator of VEGF-induced angiogenic endothelial cell activation. Positively regulates the activation of p42/MAPK1-p44/MAPK3 and of p90RSK/RPS6KA1 during myogenic differentiation. Plays an important role in the timely initiation of centrosome duplication. Inhibits keratinocyte terminal differentiation. May regulate closure of the eyelids and ventral body wall through organization of actomyosin bundles. Plays a critical role in the regulation of spine and synaptic properties in the hippocampus. Plays a role in placental homeostasis during the perinatal period. Plays an important role in generating the circadian rhythm of the aortic myofilament Ca(2+) sensitivity and vascular contractility by modulating the myosin light chain phosphorylation. This Mus musculus (Mouse) protein is Rho-associated protein kinase 2 (Rock2).